The chain runs to 1209 residues: DNA-directed RNA polymerase subunit beta (1209 aa).

Over residues Gln1173–Glu1192 the composition is skewed to basic and acidic residues. The interval Gln1173 to Lys1209 is disordered.

It belongs to the RNA polymerase beta chain family. In terms of assembly, the RNAP catalytic core consists of 2 alpha, 1 beta, 1 beta' and 1 omega subunit. When a sigma factor is associated with the core the holoenzyme is formed, which can initiate transcription.

It carries out the reaction RNA(n) + a ribonucleoside 5'-triphosphate = RNA(n+1) + diphosphate. Functionally, DNA-dependent RNA polymerase catalyzes the transcription of DNA into RNA using the four ribonucleoside triphosphates as substrates. This chain is DNA-directed RNA polymerase subunit beta, found in Lactobacillus johnsonii (strain CNCM I-12250 / La1 / NCC 533).